Consider the following 608-residue polypeptide: Mitochondrial import receptor subunit TOM70 (608 aa).

A2 is modified (N-acetylalanine). The Mitochondrial intermembrane segment spans residues 2–38; sequence AASKPVEAAVVAAAVPSSGSGVGGGGTAGPGTGGLPR. The helical transmembrane segment at 39 to 59 threads the bilayer; the sequence is WQLALAVGAPLLLGAGAIYLW. Residues 60–608 lie on the Cytoplasmic side of the membrane; the sequence is SRQQRRREAR…KKYGLKPPTL (549 aa). A disordered region spans residues 67-107; sequence EARGRGDASGLKRNSERKTPEGRASPAPGSGHPEGPGAHLD. R71 carries the omega-N-methylarginine modification. Phosphoserine is present on residues S91, S96, and S110. TPR repeat units lie at residues 114–147 and 153–186; these read AQAA…CPTE and STFY…NPKY. K185 carries the N6-acetyllysine modification. A Glycyl lysine isopeptide (Lys-Gly) (interchain with G-Cter in SUMO2) cross-link involves residue K275. TPR repeat units lie at residues 294 to 327, 329 to 362, 367 to 400, 401 to 434, 440 to 475, 476 to 509, 511 to 544, and 545 to 578; these read ENSG…EGKY, AEAL…KEAN, ANAL…DPQN, ADVY…RPES, QKCF…FPRC, AEGY…EPDN, TTYV…DNKC, and DFAY…AKSE. S434 bears the Phosphoserine mark.

This sequence belongs to the Tom70 family. As to quaternary structure, forms part of the preprotein translocase complex of the outer mitochondrial membrane (TOM complex) which consists of at least 7 different proteins (TOMM5, TOMM6, TOMM7, TOMM20, TOMM22, TOMM40 and TOMM70). Interacts with CAPN8. Interacts with TRADD, TRAF6 and STING. Interacts with MAVS; the interaction is enhanced by Sendai virus infection. Interacts with HSPA8 and HSP90AA1; both interactions are required for preprotein mitochondrial import. The interaction with HSP90AA1 is direct and mediates the association of TOMM70 with IRF3 and TBK1. Upon mitochondrial depolarization, interacts with PINK1; the interaction is required for PINK1-TOM-TIM23 supercomplex formation which is critical for PINK1 stabilization at the outer mitochondrial membrane, kinase activation and downstream mitophagy. (Microbial infection) Interacts (via C-terminus) with SARS coronaviru/SARS-CoV and SARS coronavirus-2/SARS-CoV-2 virus protein ORF9b. In terms of assembly, (Microbial infection) Interacts with parasite T.gondii RH strain MAF1b1; the interaction impairs TOMM70 import activity, enables the parasite to associate with the host mitochondria and facilitates the association of MAF1b1 with MIB complex component SAMM50, promoting the formation of SPOTs (structures positive for outer mitochondrial membrane (OMM)); the interaction is probably indirect.

The protein localises to the mitochondrion outer membrane. Its function is as follows. Acts as a receptor of the preprotein translocase complex of the outer mitochondrial membrane (TOM complex). Recognizes and mediates the translocation of mitochondrial preproteins from the cytosol into the mitochondria in a chaperone dependent manner. Mediates TBK1 and IRF3 activation induced by MAVS in response to Sendai virus infection and promotes host antiviral responses during virus infection. Upon Sendai virus infection, recruits HSP90AA1:IRF3:BAX in mitochondrion and the complex induces apoptosis. The polypeptide is Mitochondrial import receptor subunit TOM70 (Homo sapiens (Human)).